The following is a 279-amino-acid chain: 32 kDa beta-galactoside-binding lectin (279 aa).

Galectin domains lie at 13–144 (YRSV…VHWG) and 152–279 (YESG…IQIQ). Residue 213–219 (WGNEERE) coordinates a beta-D-galactoside.

The N-terminus is blocked.

Functionally, binds galactose. The polypeptide is 32 kDa beta-galactoside-binding lectin (lec-1) (Caenorhabditis elegans).